Consider the following 343-residue polypeptide: UDP-3-O-acylglucosamine N-acyltransferase 2 (343 aa).

His-251 serves as the catalytic Proton acceptor.

The protein belongs to the transferase hexapeptide repeat family. LpxD subfamily. As to quaternary structure, homotrimer.

It catalyses the reaction a UDP-3-O-[(3R)-3-hydroxyacyl]-alpha-D-glucosamine + a (3R)-hydroxyacyl-[ACP] = a UDP-2-N,3-O-bis[(3R)-3-hydroxyacyl]-alpha-D-glucosamine + holo-[ACP] + H(+). Its pathway is bacterial outer membrane biogenesis; LPS lipid A biosynthesis. In terms of biological role, catalyzes the N-acylation of UDP-3-O-acylglucosamine using 3-hydroxyacyl-ACP as the acyl donor. Is involved in the biosynthesis of lipid A, a phosphorylated glycolipid that anchors the lipopolysaccharide to the outer membrane of the cell. This Legionella pneumophila (strain Paris) protein is UDP-3-O-acylglucosamine N-acyltransferase 2.